The following is a 232-amino-acid chain: uncharacterized protein (232 aa).

Residues 1 to 71 form a disordered region; it reads MSNPTIEGDE…KENERIKNDD (71 aa). The segment covering 25 to 38 has biased composition (acidic residues); the sequence is DDLDDLDDILDDLD. Over residues 44–71 the composition is skewed to basic and acidic residues; the sequence is KNEEKKNIDEHKQTGNTSKENERIKNDD.

This is an uncharacterized protein from Schizosaccharomyces pombe (strain 972 / ATCC 24843) (Fission yeast).